Consider the following 117-residue polypeptide: Probable non-functional immunoglobulinn kappa variable 1-37 (117 aa).

The N-terminal stretch at 1–22 is a signal peptide; it reads MDMRVPAQLLGLLLLWVPGARC. Residues 24-117 form the Ig-like domain; the sequence is IQLTQSPSSL…YYGQRTYNAP (94 aa).

In terms of assembly, most probably, the immunoglobulin is not assembled due to incorrect folding of light chain. Immunoglobulins are composed of two identical heavy chains and two identical light chains; disulfide-linked.

The protein resides in the secreted. It is found in the cell membrane. Probable non-functional open reading frame (ORF) of V region of the variable domain of immunoglobulin light chains. Non-functional ORF generally cannot participate in the synthesis of a productive immunoglobulin chain due to altered V-(D)-J or switch recombination and/or splicing site (at mRNA level) and/or conserved amino acid change (protein level). Immunoglobulins, also known as antibodies, are membrane-bound or secreted glycoproteins produced by B lymphocytes. In the recognition phase of humoral immunity, the membrane-bound immunoglobulins serve as receptors which, upon binding of a specific antigen, trigger the clonal expansion and differentiation of B lymphocytes into immunoglobulins-secreting plasma cells. Secreted immunoglobulins mediate the effector phase of humoral immunity, which results in the elimination of bound antigens. The antigen binding site is formed by the variable domain of one heavy chain, together with that of its associated light chain. Thus, each immunoglobulin has two antigen binding sites with remarkable affinity for a particular antigen. The variable domains are assembled by a process called V-(D)-J rearrangement and can then be subjected to somatic hypermutations which, after exposure to antigen and selection, allow affinity maturation for a particular antigen. The sequence is that of Probable non-functional immunoglobulinn kappa variable 1-37 from Homo sapiens (Human).